The sequence spans 185 residues: Adenine phosphoribosyltransferase (185 aa).

Belongs to the purine/pyrimidine phosphoribosyltransferase family. As to quaternary structure, homodimer.

The protein localises to the cytoplasm. It carries out the reaction AMP + diphosphate = 5-phospho-alpha-D-ribose 1-diphosphate + adenine. It participates in purine metabolism; AMP biosynthesis via salvage pathway; AMP from adenine: step 1/1. In terms of biological role, catalyzes a salvage reaction resulting in the formation of AMP, that is energically less costly than de novo synthesis. This is Adenine phosphoribosyltransferase from Kineococcus radiotolerans (strain ATCC BAA-149 / DSM 14245 / SRS30216).